The following is a 561-amino-acid chain: Carbohydrate sulfotransferase 15 (561 aa).

The Cytoplasmic segment spans residues 1 to 80 (MRHCINCCIQ…FLRFRKGKRC (80 aa)). Residues 81–101 (SLVFGLIIMTLVMASYILSGA) form a helical; Signal-anchor for type II membrane protein membrane-spanning segment. Residues 102–561 (HQELLISSPF…DDEAFAWKTT (460 aa)) lie on the Lumenal side of the membrane. Residue 263-267 (KCGTT) participates in 3'-phosphoadenylyl sulfate binding. Asn-364 is a glycosylation site (N-linked (GlcNAc...) asparagine). 2 residues coordinate 3'-phosphoadenylyl sulfate: Arg-392 and Ser-400.

The protein belongs to the sulfotransferase 1 family. Homodimer; disulfide-linked (Potential). The relevance of homodimerization is however unsure. May interact with phosphorylated proteins in resting B-cells, including HCK. The cofactor is a divalent metal cation. Glutathione serves as cofactor. In terms of processing, glycosylated.

It localises to the golgi apparatus membrane. It catalyses the reaction dermatan 4'-sulfate + n 3'-phosphoadenylyl sulfate = dermatan 4',6'-bissulfate + n adenosine 3',5'-bisphosphate + n H(+). The catalysed reaction is chondroitin 4'-sulfate + n 3'-phosphoadenylyl sulfate = chondroitin 4',6'-bissulfate + n adenosine 3',5'-bisphosphate + n H(+). With respect to regulation, inhibited by phenyl beta-GalNAc(4,6-SO(4)). Functionally, sulfotransferase that transfers sulfate from 3'-phosphoadenosine 5'-phosphosulfate (PAPS) to the C-6 hydroxyl group of the GalNAc 4-sulfate residue of chondroitin sulfate A and forms chondroitin sulfate E containing GlcA-GalNAc(4,6-SO(4)) repeating units. It also transfers sulfate to a unique non-reducing terminal sequence, GalNAc(4SO4)-GlcA(2SO4)-GalNAc(6SO4), to yield a highly sulfated structure similar to the structure found in thrombomodulin chondroitin sulfate. May also act as a B-cell receptor involved in BCR ligation-mediated early activation that mediate regulatory signals key to B-cell development and/or regulation of B-cell-specific RAG expression; however such results are unclear in vivo. The polypeptide is Carbohydrate sulfotransferase 15 (Chst15) (Rattus norvegicus (Rat)).